Consider the following 279-residue polypeptide: NADPH-dependent 7-cyano-7-deazaguanine reductase (279 aa).

86 to 88 (IES) is a substrate binding site. Residue 88–89 (SK) coordinates NADPH. C187 (thioimide intermediate) is an active-site residue. D194 serves as the catalytic Proton donor. 226-227 (HE) serves as a coordination point for substrate. 255-256 (RG) contributes to the NADPH binding site.

The protein belongs to the GTP cyclohydrolase I family. QueF type 2 subfamily. Homodimer.

The protein resides in the cytoplasm. It catalyses the reaction 7-aminomethyl-7-carbaguanine + 2 NADP(+) = 7-cyano-7-deazaguanine + 2 NADPH + 3 H(+). Its pathway is tRNA modification; tRNA-queuosine biosynthesis. Catalyzes the NADPH-dependent reduction of 7-cyano-7-deazaguanine (preQ0) to 7-aminomethyl-7-deazaguanine (preQ1). The sequence is that of NADPH-dependent 7-cyano-7-deazaguanine reductase from Pasteurella multocida (strain Pm70).